A 1416-amino-acid chain; its full sequence is DNA-directed RNA polymerase subunit beta' (1416 aa).

Residues C60, C62, C75, and C78 each coordinate Zn(2+). The Mg(2+) site is built by D449, D451, and D453. Zn(2+)-binding residues include C781, C855, C862, and C865.

This sequence belongs to the RNA polymerase beta' chain family. In terms of assembly, the RNAP catalytic core consists of 2 alpha, 1 beta, 1 beta' and 1 omega subunit. When a sigma factor is associated with the core the holoenzyme is formed, which can initiate transcription. Mg(2+) serves as cofactor. It depends on Zn(2+) as a cofactor.

It carries out the reaction RNA(n) + a ribonucleoside 5'-triphosphate = RNA(n+1) + diphosphate. Functionally, DNA-dependent RNA polymerase catalyzes the transcription of DNA into RNA using the four ribonucleoside triphosphates as substrates. This is DNA-directed RNA polymerase subunit beta' from Treponema pallidum (strain Nichols).